The following is a 203-amino-acid chain: Small ribosomal subunit protein uS4 (203 aa).

Residues 93–156 (RRLDNVVYRL…IKVPAILEAV (64 aa)) enclose the S4 RNA-binding domain.

The protein belongs to the universal ribosomal protein uS4 family. In terms of assembly, part of the 30S ribosomal subunit. Contacts protein S5. The interaction surface between S4 and S5 is involved in control of translational fidelity.

One of the primary rRNA binding proteins, it binds directly to 16S rRNA where it nucleates assembly of the body of the 30S subunit. Its function is as follows. With S5 and S12 plays an important role in translational accuracy. In Streptococcus suis (strain 98HAH33), this protein is Small ribosomal subunit protein uS4.